The sequence spans 353 residues: MSTIYMSQLPATLPLMEGDQDQGLYPAFHRAKDPPILFPFMIDSAVEHQGQIYGDQGLRRQQVLGESNQQFNDHMMMGGSDVFLTPSPFRPTIQSIGSDMIQRSSYDPYDIESNNKQHANGSTSKWMSTPPMKMRIIRKGAATDPEGGAVRKPRRRAQAHQDESQQQLQQALGVVRVCSDCNTTKTPLWRSGPCGPKSLCNACGIRQRKARRAMAAAANGGAAVAPAKSVAAAPVNNKPAAKKEKRAADVDRSLPFKKRCKMVDHVAAAVAATKPTAAGEVVAAAPKDQDHVIVVGGENAAATSMPAQNPISKAAATAAAAAASPAFFHGLPRDEITDAAMLLMTLSCGLVHS.

The Nuclear localization signal 1 signature appears at 137–144 (IRKGAATD). A disordered region spans residues 142–166 (ATDPEGGAVRKPRRRAQAHQDESQQ). The GATA-type zinc finger occupies 178 to 203 (CSDCNTTKTPLWRSGPCGPKSLCNAC). The short motif at 244-251 (EKRAADVD) is the Nuclear localization signal 2 element.

This sequence belongs to the type IV zinc-finger family. Class B subfamily. As to expression, mostly expressed in leaves and stems, and, at low levels, in roots.

It localises to the nucleus. Transcriptional regulator that specifically binds 5'-GATA-3' or 5'-GAT-3' motifs within gene promoters. Influences the expression of nuclear encoded chloroplast-targeted genes. Regulates chloroplast development and promotes chlorophyll accumulation. Modulates plant architecture (e.g. height, length and width of leaf blades, and flowering tillers production) and represses tillering, probably by modulating number of cells. Promotes senescence. Involved in grain filling, panicle development and starch production. The polypeptide is Protein CYTOKININ-RESPONSIVE GATA TRANSCRIPTION FACTOR 1 (Oryza sativa subsp. japonica (Rice)).